The chain runs to 256 residues: (R)-S-adenosyl-L-methionine hydrolase (256 aa).

Asp7, His41, Asp68, and Asn183 together coordinate adenosine. 6 residues coordinate (R)-S-adenosyl-L-methionine: Asn183, Tyr212, Ser226, Glu231, Val234, and Met236. Residue Val234 coordinates adenosine.

It belongs to the SAM hydrolase / SAM-dependent halogenase family. Homotrimer.

It catalyses the reaction (R)-S-adenosyl-L-methionine + H2O = adenosine + L-methionine + H(+). Catalyzes the hydrolysis of S-adenosyl-L-methionine (SAM) into adenosine and L-methionine. Is likely stereoselective, specifically hydrolyzing (R)-S-adenosyl-L-methionine ((R)-SAM), the inactive form of the ubiquitous cofactor SAM, and not the active form of SAM, (S)-S-adenosyl-L-methionine. Probaly plays a role in preventing accumulation of (R)-S-adenosyl-L-methionine in cells; maintenance of (S)-S-denosyl-L-methionine homochirality is important for cellular health given that the (R)-form is largely inactive as a methyl donor and can function as an inhibitor of methyltransferases. Is unable to mediate a fluorination or chlorination reaction with SAM. In Pyrococcus horikoshii (strain ATCC 700860 / DSM 12428 / JCM 9974 / NBRC 100139 / OT-3), this protein is (R)-S-adenosyl-L-methionine hydrolase.